We begin with the raw amino-acid sequence, 244 residues long: Protein crossbronx (244 aa).

Positions 20 to 176 (QQEYKILAEY…VQKNIKESKD (157 aa)) constitute a UBC core domain.

The protein belongs to the ubiquitin-conjugating enzyme family. FTS subfamily.

This is Protein crossbronx (cbx) from Drosophila yakuba (Fruit fly).